The chain runs to 351 residues: Peptide chain release factor 1 (351 aa).

Gln229 bears the N5-methylglutamine mark.

This sequence belongs to the prokaryotic/mitochondrial release factor family. In terms of processing, methylated by PrmC. Methylation increases the termination efficiency of RF1.

It localises to the cytoplasm. In terms of biological role, peptide chain release factor 1 directs the termination of translation in response to the peptide chain termination codons UAG and UAA. The chain is Peptide chain release factor 1 from Ruegeria pomeroyi (strain ATCC 700808 / DSM 15171 / DSS-3) (Silicibacter pomeroyi).